The sequence spans 311 residues: Methionyl-tRNA formyltransferase (311 aa).

112 to 115 (SLLP) contributes to the (6S)-5,6,7,8-tetrahydrofolate binding site.

The protein belongs to the Fmt family.

The catalysed reaction is L-methionyl-tRNA(fMet) + (6R)-10-formyltetrahydrofolate = N-formyl-L-methionyl-tRNA(fMet) + (6S)-5,6,7,8-tetrahydrofolate + H(+). Its function is as follows. Attaches a formyl group to the free amino group of methionyl-tRNA(fMet). The formyl group appears to play a dual role in the initiator identity of N-formylmethionyl-tRNA by promoting its recognition by IF2 and preventing the misappropriation of this tRNA by the elongation apparatus. This chain is Methionyl-tRNA formyltransferase, found in Rhizobium leguminosarum bv. trifolii (strain WSM2304).